The primary structure comprises 423 residues: MALKATNFFTEPEYKLQDDLILDIRDLHVSFKVKDGIMQAVRGVDLKVKKGSIVGIVGESGSGKSVCVKSIIGFNDGAKTTAKLMNFKNIDISKMKKHQWQYYRGTYVSYISQDPLFSLNPTMTIGRQVKEAIYVSCKRRYYQTKSDLKYDLQTERIDLDTYKEKLAQAKETYKAKTTKAAVHAKTLEILNFIGIDQAEKRLKAFPSEFSGGMRQRIVIAIAVATEPDLIIADEPTTALDVTIQAKALNLIKQLRDLLNITIIFISHNISLIANFCDFVYVMYAGRLVEKGLVEEIFTNPVHPYTWALMASIPEGTDKNAPLTSIPGYIPNMLSPPKGDAFAARNQFALAIDFEHQPPFFDVTETHKAATWLLHPQAPKVEMPADVKEKIAITRKALAIKMPSQPVKQPKSNGNKKTKTKSAR.

Residues 24–309 enclose the ABC transporter domain; sequence IRDLHVSFKV…PVHPYTWALM (286 aa). 58 to 65 contacts ATP; sequence GESGSGKS. The segment at 398 to 423 is disordered; sequence AIKMPSQPVKQPKSNGNKKTKTKSAR. The span at 413–423 shows a compositional bias: basic residues; sequence GNKKTKTKSAR.

Belongs to the ABC transporter superfamily. The complex is composed of two ATP-binding proteins (OppD and OppF), two transmembrane proteins (OppB and OppC) and a solute-binding protein (OppA).

The protein localises to the cell membrane. The enzyme catalyses a [peptide](out) + ATP + H2O = a [peptide](in) + ADP + phosphate + H(+). Its function is as follows. Part of the ABC transporter complex OppABCDF involved in the uptake of oligopeptides. Probably responsible for energy coupling to the transport system. This Mycoplasma pneumoniae (strain ATCC 29342 / M129 / Subtype 1) (Mycoplasmoides pneumoniae) protein is Oligopeptide transport ATP-binding protein OppD (oppD).